Reading from the N-terminus, the 229-residue chain is CRISPR pre-crRNA endoribonuclease Cas5d (229 aa).

It belongs to the CRISPR-associated protein Cas5 family. Subtype I-C/Dvulg subfamily. Does not require a metal cofactor. serves as cofactor.

Functionally, CRISPR (clustered regularly interspaced short palindromic repeat) is an adaptive immune system that provides protection against mobile genetic elements (viruses, transposable elements and conjugative plasmids). CRISPR clusters contain spacers, sequences complementary to antecedent mobile elements, and target invading nucleic acids. CRISPR clusters are transcribed and processed into CRISPR RNA (crRNA). This protein is a sequence-specific endonuclease that cleaves pre-crRNA into mature crRNA, possibly by an intramolecular attack of the 2'-hydroxyl group of G26 on the scissile phosphodiester, cutting the precursor 3' to G26 residue yielding 5'-hydroxyl and 2' and/or 3' ends lacking a hydroxyl group (perhaps a 2'/3' cyclic phosphodiester). Requires between 4 and 8 nt downstream of the cleavage site for both binding and cleavage of pre-crRNA. Substitution with dG at this position abolishes cleavage but not RNA binding. Does not cleave pre-crRNA associated with the M.succiniciproducens strain MBEL55E Cas5 protein (AC Q65TW5) CRISPR locus. The protein is CRISPR pre-crRNA endoribonuclease Cas5d of Thermus thermophilus (strain ATCC BAA-163 / DSM 7039 / HB27).